A 489-amino-acid chain; its full sequence is Betaine aldehyde dehydrogenase (489 aa).

Residues Thr-26 and Asp-93 each coordinate K(+). 150–152 (GAW) provides a ligand contact to NAD(+). Catalysis depends on Lys-162, which acts as the Charge relay system. 176 to 179 (KPSE) is an NAD(+) binding site. Val-180 provides a ligand contact to K(+). Position 229 to 232 (229 to 232 (GVET)) interacts with NAD(+). Residue Leu-245 participates in K(+) binding. The Proton acceptor role is filled by Glu-251. NAD(+)-binding residues include Gly-253, Cys-285, and Glu-386. Residue Cys-285 is the Nucleophile of the active site. The residue at position 285 (Cys-285) is a Cysteine sulfenic acid (-SOH). K(+)-binding residues include Lys-456 and Gly-459. Catalysis depends on Glu-463, which acts as the Charge relay system.

It belongs to the aldehyde dehydrogenase family. Dimer of dimers. It depends on K(+) as a cofactor.

The catalysed reaction is betaine aldehyde + NAD(+) + H2O = glycine betaine + NADH + 2 H(+). The protein operates within amine and polyamine biosynthesis; betaine biosynthesis via choline pathway; betaine from betaine aldehyde: step 1/1. Involved in the biosynthesis of the osmoprotectant glycine betaine. Catalyzes the irreversible oxidation of betaine aldehyde to the corresponding acid. The protein is Betaine aldehyde dehydrogenase of Burkholderia ambifaria (strain MC40-6).